Here is a 360-residue protein sequence, read N- to C-terminus: F-box protein SKP2A (360 aa).

The F-box domain occupies 25-71 (IKEWKDIPVELLMRILSLVDDRNVIVASGVCTGWRDAISFGLTRLRL). (indol-3-yl)acetate-binding positions include 127–128 (SL), 149–152 (NLSG), 175–178 (NLCG), and N202.

Part of a SCF (ASK-cullin-F-box) protein ligase complex. Interacts with CUL1 (RUB1-modified and non-modified isoforms), SKP1A, SKP1B and ASK18. Recruit DPB and phosphorylated E2FC. Interacts with auxin. Auxin controls the interaction with DPB. Post-translationally, polyubiquitinated and subsequently targeted to proteasome. Auxin promotes this ubiquitination-mediated degradation. Expressed in embryo, seedlings, hypocotyl, roots, leaves and flowers.

Its subcellular location is the nucleus. The protein operates within protein modification; protein ubiquitination. In terms of biological role, component of SCF(SKP2A) E3 ubiquitin ligase complexes, which mediate the ubiquitination and subsequent proteasomal degradation of target proteins (including cell cycle repressors). Acts as an auxin receptor; one active auxin is indole-3-acetate. Regulates the stability of the transcription factors E2FC and DPB, repressors of cell proliferation. Confers increase tolerance to osmotic stress by promoting cell division, especially in meristems. Promotes the formation of lateral root primordia. This is F-box protein SKP2A (SKP2A) from Arabidopsis thaliana (Mouse-ear cress).